A 371-amino-acid chain; its full sequence is MDLPGGHLAVVLFLFVLVSMSTENNIIRWCTVSDAEDQKCLDLAGNATARNLRGQLVCVRGQSPTDCMKQIKNGTADASTMYADEIYTAGFCYGLDVAVGESYNGVDGINYYVVALARTSSSDLSLLEMHERSSCHPGMRTTVGWTVPIGFLVNTSQISVDVQCNFPHAVGDFFGYSCVPGVKDPEHDPKGNNPRNLCEACIGDENDRHICANNPRERHFGEAGALRCVAENLGDVAFVKHTTVFDNMQGKNQESWALDLELEDLKLLCPDGSEANLFQHESCHLAVVPTNAVVVRLEDKCRVYKFLERVQNAFGNTTEGFSLFSSVNYGQPDVLFSDSTKKLLRVMGTYTSWLGPSYTTILRAFECEGLC.

Positions 1-21 (MDLPGGHLAVVLFLFVLVSMS) are cleaved as a signal peptide. Residues 27–367 (IRWCTVSDAE…YTTILRAFEC (341 aa)) enclose the Transferrin-like domain.

In terms of assembly, interacts with OTOL1.

It is found in the secreted. In terms of biological role, required for normal otolith growth and deposition of otolin-1 in the otolith. The polypeptide is Otolith matrix protein 1 (otomp) (Danio rerio (Zebrafish)).